The following is a 173-amino-acid chain: Peptide methionine sulfoxide reductase MsrA (173 aa).

Cys-10 is an active-site residue.

The protein belongs to the MsrA Met sulfoxide reductase family.

It catalyses the reaction L-methionyl-[protein] + [thioredoxin]-disulfide + H2O = L-methionyl-(S)-S-oxide-[protein] + [thioredoxin]-dithiol. It carries out the reaction [thioredoxin]-disulfide + L-methionine + H2O = L-methionine (S)-S-oxide + [thioredoxin]-dithiol. In terms of biological role, has an important function as a repair enzyme for proteins that have been inactivated by oxidation. Catalyzes the reversible oxidation-reduction of methionine sulfoxide in proteins to methionine. In Psychrobacter arcticus (strain DSM 17307 / VKM B-2377 / 273-4), this protein is Peptide methionine sulfoxide reductase MsrA.